We begin with the raw amino-acid sequence, 338 residues long: Acyl-CoA-binding domain-containing protein 1 (338 aa).

The chain crosses the membrane as a helical; Signal-anchor span at residues 11-31 (IIFGLIFAYLLAKLISILLAF). 2 N-linked (GlcNAc...) asparagine glycosylation sites follow: Asn-35 and Asn-41. The tract at residues 69–89 (AEQGSLRGDEDESDDDDWEGV) is disordered. Over residues 77–89 (DEDESDDDDWEGV) the composition is skewed to acidic residues. One can recognise an ACB domain in the interval 94–184 (LDEAFSAATA…VTQLYPAWVE (91 aa)). Residues 126–130 (YGLYK), Lys-152, and Tyr-171 contribute to the an acyl-CoA site. A glycan (N-linked (GlcNAc...) asparagine) is linked at Asn-191. 4 ANK repeats span residues 217 to 246 (LKIDAIHAFAREGEVENLLKCIENGIPVNA), 250 to 279 (EGRTPLHWAIDRGHLNVAEALVDKNADVNA), 283 to 312 (EGQTSLHYAVVCEREALAEFLVKQKADTTI), and 316 to 338 (DGNSPLDLCESEWSWMREKKDSN).

This sequence belongs to the ACBP family. In terms of assembly, interacts with RAP2-12. Binds to SMO1-1 and SMO1-2. Glycosylated. In seeds, localized in the outer integument. Expressed at low levels in roots, stems, leaves, flowers, and siliques, especially within seeds.

Its subcellular location is the cell membrane. The protein resides in the secreted. It is found in the cell wall. The protein localises to the endoplasmic reticulum membrane. Binds medium- and long-chain acyl-CoA esters with very high affinity. Can interact in vitro with arachidonyl-CoA, barely with oleoyl-CoA, but not with palmitoyl-CoA. Confers tolerance and binds to lead ions Pb(2+), probably by promoting lead translocation from roots to shoots. May function as an intracellular carrier of acyl-CoA esters. Modulates negatively sterol synthesis during embryogenesis and gametophytes development via interactions with SMO1-1 and SMO1-2; sterols serve as lipid modulators for gene expression of homeodomain-leucine zipper IV transcription factors. The chain is Acyl-CoA-binding domain-containing protein 1 from Arabidopsis thaliana (Mouse-ear cress).